A 104-amino-acid polypeptide reads, in one-letter code: Circadian clock oscillator protein KaiB (104 aa).

It belongs to the KaiB family. In terms of assembly, the KaiABC complex composition changes during the circadian cycle to control KaiC phosphorylation. Complexes KaiC(6), KaiA(2-4):KaiC(6), KaiB(6):KaiC(6) and KaiC(6):KaiB(6):KaiA(12) are among the most important forms, many form cooperatively. Undergoes a major conformational rearrangment; in the free state forms homotetramers as a dimer of dimers. When bound to the CI domain of KaiC switches to a monomeric thioredoxin-fold (KaiB(fs)). KaiB(fs) binds CikA, leading it to dephosphorylate phospho-RpaA.

Functionally, key component of the KaiABC oscillator complex, which constitutes the main circadian regulator in cyanobacteria. Complex composition changes during the circadian cycle to control KaiC phosphorylation. KaiA stimulates KaiC autophosphorylation, while KaiB sequesters KaiA, leading to KaiC autodephosphorylation. Phospho-Ser-431 KaiC accumulation triggers binding of KaiB to form the KaiB(6):KaiC(6) complex, leading to changes in output regulators CikA and SasA. KaiB switches to a thioredoxin-like fold (KaiB(fs)) when bound to KaiC. KaiB(6):KaiC(6) formation exposes a site for KaiA binding that sequesters KaiA from KaiC, making the KaiC(6):KaiB(6):KaiA(12) complex that results in KaiC autodephosphorylation. In terms of biological role, a metamorphic protein which reversibly switches between an inactive tetrameric fold and a rare, thioredoxin-like monomeric fold (KaiB(fs)). KaiB(fs) binds phospho-KaiC, KaiA and CikA. KaiA and CikA compete for binding to KaiB(fs), and KaiB(fs) and SasA compete for binding to KaiC, thus the clock oscillator and output signal pathway are tightly coupled. This Acaryochloris marina (strain MBIC 11017) protein is Circadian clock oscillator protein KaiB.